A 500-amino-acid polypeptide reads, in one-letter code: Potassium/proton antiporter CemA (500 aa).

Residues 129–149 (LFLTTIKTIFILFFVPFLVNF) traverse the membrane as a helical segment. Positions 204–354 (HQTHRDSKPL…GSLDSIKNKD (151 aa)) are insert. Transmembrane regions (helical) follow at residues 378–398 (ITNF…LITL), 425–445 (ILLI…ELFF), and 461–481 (IFLL…YLIF).

Belongs to the CemA family.

The protein resides in the plastid. It localises to the chloroplast inner membrane. It carries out the reaction K(+)(in) + H(+)(out) = K(+)(out) + H(+)(in). Contributes to K(+)/H(+) antiport activity by supporting proton efflux to control proton extrusion and homeostasis in chloroplasts in a light-dependent manner to modulate photosynthesis. Prevents excessive induction of non-photochemical quenching (NPQ) under continuous-light conditions. Indirectly promotes efficient inorganic carbon uptake into chloroplasts. The protein is Potassium/proton antiporter CemA of Chlamydomonas reinhardtii (Chlamydomonas smithii).